The following is a 316-amino-acid chain: Secondary metabolism regulator laeA (316 aa).

This sequence belongs to the methyltransferase superfamily. LaeA methyltransferase family. In terms of assembly, component of the heterotrimeric velvet complex composed of laeA, ve1 and velB; Ve1 acting as a bridging protein between laeA and velB. Interacts directly with veA.

The protein resides in the nucleus. The protein localises to the cytoplasm. It catalyses the reaction L-methionyl-[protein] + S-adenosyl-L-methionine = S-methyl-L-methionyl-[protein] + S-adenosyl-L-homocysteine. Methyltransferase that performs automethylation. No other methyl-accepting substrate has been identified yet. Component of the velvet transcription factor complex that acts as a global regulator for secondary metabolite gene expression. Controls the expression of the mycotoxins trichothecenes and zearalenon gene clusters. Negatively controls perithecial induction, but positively controls virulence toward the host plant. In Gibberella zeae (strain ATCC MYA-4620 / CBS 123657 / FGSC 9075 / NRRL 31084 / PH-1) (Wheat head blight fungus), this protein is Secondary metabolism regulator laeA.